We begin with the raw amino-acid sequence, 192 residues long: Probable GTP-binding protein EngB (192 aa).

Residues 22–192 (QIPEIVFAGR…LLAHLAQYIR (171 aa)) enclose the EngB-type G domain. GTP contacts are provided by residues 30–37 (GRSNVGKS), 57–61 (GKTRL), 75–78 (DLPG), 142–145 (TKDD), and 172–174 (YSS). Mg(2+) is bound by residues Ser-37 and Thr-59.

It belongs to the TRAFAC class TrmE-Era-EngA-EngB-Septin-like GTPase superfamily. EngB GTPase family. Mg(2+) is required as a cofactor.

Its function is as follows. Necessary for normal cell division and for the maintenance of normal septation. This Chlorobium phaeobacteroides (strain DSM 266 / SMG 266 / 2430) protein is Probable GTP-binding protein EngB.